Consider the following 692-residue polypeptide: Elongation factor G (692 aa).

The region spanning 8–282 is the tr-type G domain; sequence ENTRNIGIMA…AVIDYLPSPL (275 aa). Residues 17-24, 81-85, and 135-138 contribute to the GTP site; these read AHIDAGKT, DTPGH, and NKMD.

The protein belongs to the TRAFAC class translation factor GTPase superfamily. Classic translation factor GTPase family. EF-G/EF-2 subfamily.

It localises to the cytoplasm. In terms of biological role, catalyzes the GTP-dependent ribosomal translocation step during translation elongation. During this step, the ribosome changes from the pre-translocational (PRE) to the post-translocational (POST) state as the newly formed A-site-bound peptidyl-tRNA and P-site-bound deacylated tRNA move to the P and E sites, respectively. Catalyzes the coordinated movement of the two tRNA molecules, the mRNA and conformational changes in the ribosome. The chain is Elongation factor G from Bacillus cereus (strain ATCC 14579 / DSM 31 / CCUG 7414 / JCM 2152 / NBRC 15305 / NCIMB 9373 / NCTC 2599 / NRRL B-3711).